Here is a 195-residue protein sequence, read N- to C-terminus: MALCARAALLLGVLQVLALLGAAQDPTDAQGSASGNHSVLTSNINITENTNQTMSVVSNQTSEMQSTAKPSVLPKTTTLITVKPATIVKISTPGVLPHVTPTASKSTPNASASPNSTHTSASMTTPAHSSLLTTVTVSATTHPTKGKGSKFDAGSFVGGIVLTLGVLSILYIGCKMYYSRRGIRYRSIDEHDAII.

An N-terminal signal peptide occupies residues Met-1–Ala-23. The Extracellular segment spans residues Gln-24–Asp-152. Residues Asn-36, Asn-45, Asn-51, Asn-59, Asn-109, and Asn-115 are each glycosylated (N-linked (GlcNAc...) asparagine). Residues Val-99–Ala-127 are disordered. A compositionally biased stretch (polar residues) spans Pro-101–Pro-126. The chain crosses the membrane as a helical span at residues Ala-153–Gly-173. The Cytoplasmic segment spans residues Cys-174 to Ile-195. Phosphoserine is present on Ser-187.

It belongs to the CD164 family.

The protein resides in the membrane. In terms of biological role, implicated in oncotic cell death, characterized by cell swelling, organelle swelling, vacuolization and increased membrane permeability. In Mus musculus (Mouse), this protein is Porimin (Tmem123).